The chain runs to 236 residues: MSVNGNLRSLIDMLEAAQDGHMIKIALRSFAHSCGYDRFAYLQKDGTQVRTFHSYPGPWESIYLGSDYFNIDPVLAEAKRRRDVFFWTADAWPARGSSPLRRFRDEAISHGIRCGVTIPVEGSYGSAMMLTFASPERKVDISGVLDPKKAVQLLMMVHYQLKIIAAKTVLNPKQMLSPREMLCLVWASKGKTASVTANLTGINARTVQHYLDKARAKLDAESVPQLVAIAKDRGLV.

Residues 169-234 (VLNPKQMLSP…QLVAIAKDRG (66 aa)) enclose the HTH luxR-type domain. A DNA-binding region (H-T-H motif) is located at residues 193–212 (ASVTANLTGINARTVQHYLD).

Belongs to the autoinducer-regulated transcriptional regulatory protein family.

Its function is as follows. Positive regulation of conjugal transfer. TraR activates target genes in the presence of AAI and also activates traR and traI themselves. This is Probable transcriptional activator protein TraR (traR) from Sinorhizobium fredii (strain NBRC 101917 / NGR234).